A 198-amino-acid chain; its full sequence is Probable opine utilization operon repressor (198 aa).

The protein operates within opine metabolism; mannopine biosynthesis [regulation]. In terms of biological role, possible repressor for genes for mannityl-opine utilization and / or plasmid conjugative transfer. The sequence is that of Probable opine utilization operon repressor (opnR) from Rhizobium rhizogenes (Agrobacterium rhizogenes).